The primary structure comprises 409 residues: Elongation factor Tu (409 aa).

The tr-type G domain maps to 10–214 (KPHVNIGTIG…AVDDNIPEPE (205 aa)). The interval 19–26 (GHVDHGKT) is G1. 19–26 (GHVDHGKT) contributes to the GTP binding site. A Mg(2+)-binding site is contributed by Thr26. Residues 60 to 64 (GITIN) form a G2 region. Residues 81–84 (DCPG) are G3. Residues 81 to 85 (DCPGH) and 136 to 139 (NKKD) contribute to the GTP site. Residues 136-139 (NKKD) form a G4 region. A G5 region spans residues 174 to 176 (SAL).

This sequence belongs to the TRAFAC class translation factor GTPase superfamily. Classic translation factor GTPase family. EF-Tu/EF-1A subfamily. As to quaternary structure, monomer.

The protein localises to the cytoplasm. It catalyses the reaction GTP + H2O = GDP + phosphate + H(+). Its function is as follows. GTP hydrolase that promotes the GTP-dependent binding of aminoacyl-tRNA to the A-site of ribosomes during protein biosynthesis. The protein is Elongation factor Tu of Crocosphaera subtropica (strain ATCC 51142 / BH68) (Cyanothece sp. (strain ATCC 51142)).